A 652-amino-acid chain; its full sequence is Forkhead box protein O1 (652 aa).

Disordered stretches follow at residues 1-62 and 112-154; these read MAEA…ASAS and VHPA…SSRR. T24 is subject to Phosphothreonine; by PKB/AKT1 or PKB/AKT2 and SGK1. Low complexity predominate over residues 35-62; sequence SNSTTSSPAPSGGAAANPDAAASLASAS. The span at 114 to 133 shows a compositional bias: pro residues; that stretch reads PAPPQPPPTGPLSQPPPVPP. Residues 134 to 146 are compositionally biased toward low complexity; sequence SAAAAAGPLAGQP. Residues 156-232 constitute a DNA-binding region (fork-head); sequence AWGNLSYADL…VQNEGTGKSS (77 aa). 2 DNA-binding regions span residues 208–215 and 231–234; these read NSIRHNLS and SSWW. Position 209 is a phosphoserine; by STK4/MST1 (S209). Residues S215, S231, and S232 each carry the phosphoserine modification. Disordered stretches follow at residues 231–342 and 383–410; these read SSWW…DVHS and SLTV…PNTS. 2 positions are modified to N6-acetyllysine: K242 and K245. Phosphoserine; by CDK1 is present on S246. Omega-N-methylarginine; by PRMT1 occurs at positions 248 and 250. The Nuclear localization signal motif lies at 248–250; the sequence is RRR. S253 carries the post-translational modification Phosphoserine; by PKB/AKT1 and SGK1. 3 positions are modified to N6-acetyllysine: K259, K262, and K271. The span at 261-272 shows a compositional bias: basic residues; it reads AKSRGRAAKKKA. The tract at residues 280-562 is sufficient for interaction with NLK; that stretch reads GPGDSPGSQF…TPVKTPLQVP (283 aa). Residues S284 and S295 each carry the phosphoserine modification. Residues 306 to 323 show a composition bias toward polar residues; the sequence is NWSTFRPRTSSNASTISG. S316 bears the Phosphoserine; by PKB/AKT1 or PKB/AKT2 mark. S319 is modified (phosphoserine; by CK1 and SGK1). S322 is modified (phosphoserine; by CK1). S326 bears the Phosphoserine mark. T330 carries the post-translational modification Phosphothreonine. A required for interaction with RUNX2 region spans residues 360 to 456; that stretch reads SEISNPENME…GGLNQYNCAP (97 aa). The segment covering 392-401 has biased composition (polar residues); that stretch reads PGSMMQQTPC. K420 carries the post-translational modification N6-acetyllysine. The Required for interaction with SIRT1 signature appears at 459–463; the sequence is LKELL.

As to quaternary structure, interacts with EP300 and CREBBP; the interactions acetylate FOXO1. Interacts with the 14-3-3 proteins, YWHAG and YWHAZ; the interactions require insulin-stimulated phosphorylation on Thr-24, promote nuclear exit and loss of transcriptional activity. Interacts with SKP2; the interaction ubiquitinates FOXO1 leading to its proteasomal degradation. Interacts with PMRT1; methylates FOXO1, prevents PKB/AKT1 phosphorylation and retains FOXO1 in the nucleus. Interacts (via an N-terminal domain) with FCOR; the interaction is direct, occurs in a forskolin-independent manner and prevents SIRT1 binding to FOXO1. Interacts (via the C-terminal half) with ATF4 (via its DNA-binding domain); the interaction occurs in osteoblasts, regulates glucose homeostasis via suppression of beta-cell proliferation and subsequent decrease in insulin production. Interacts with RUNX2; the interaction inhibits RUNX2 transcriptional activity and mediates the IGF1/insulin-dependent BGLAP expression in osteoblasts. Interacts with PPP2R1A; the interaction regulates the dephosphorylation of FOXO1 at Thr-24 and Ser-253 leading to its nuclear import. Binds to CDK1. Interacts with LRPPRC. Interacts with RUNX2; the interaction inhibits RUNX2 transcriptional activity and mediates the IGF1/insulin-dependent BGLAP expression in osteoblasts. Interacts with NLK. Interacts with SIRT1; the interaction results in the deacetylation of FOXO1 leading to activation of FOXO1-mediated transcription of genes involved in DNA repair and stress resistance. The interaction requires the presence of KRIT1 and is inhibited by FCOR. Interacts with SIRT2; the interaction is disrupted in response to oxidative stress or serum deprivation, leading to increased level of acetylated FOXO1, which promotes stress-induced autophagy by stimulating E1-like activating enzyme ATG7. Interacts (acetylated form) with ATG7; the interaction is increased in response to oxidative stress or serum deprivation and promotes the autophagic process leading to cell death. Interacts (acetylated form) with PPARG. Interacts with XBP1 isoform 2; this interaction is direct and leads to FOXO1 ubiquitination and degradation via the proteasome pathway. Interacts (via the Fork-head domain) with CEBPA; the interaction increases when FOXO1 is deacetylated. Interacts with WDFY2. Forms a complex with WDFY2 and AKT1. Interacts with CRY1. Interacts with PPIA/CYPA; the interaction promotes FOXO1 dephosphorylation, nuclear accumulation and transcriptional activity. Interacts with TOX4; FOXO1 is required for full induction of TOX4-dependent activity and the interaction is inhibited by insulin. Interacts (when phosphorylated on Ser-253) with STUB1/CHIP. In terms of processing, phosphorylation by NLK promotes nuclear export and inhibits the transcriptional activity. In response to growth factors, phosphorylation on Thr-24, Ser-253 and Ser-319 by PKB/AKT1 promotes nuclear export and inactivation of transactivational activity. Phosphorylation on Thr-24 is required for binding 14-3-3 proteins. Phosphorylation of Ser-253 decreases DNA-binding activity and promotes the phosphorylation of Thr-24 and Ser-316, permitting phosphorylation of Ser-319 and Ser-322, probably by CDK1, leading to nuclear exclusion and loss of function. Stress signals, such as response to oxygen or nitric oxide, attenuate the PKB/AKT1-mediated phosphorylation leading to nuclear retention. Phosphorylation of Ser-326 is independent of IGF1 and leads to reduced function. Dephosphorylated on Thr-24 and Ser-253 by PP2A in beta-cells under oxidative stress leading to nuclear retention. Phosphorylation of Ser-246 by CDK1 disrupts binding of 14-3-3 proteins leading to nuclear accumulation and has no effect on DNA-binding nor transcriptional activity. Phosphorylation by STK4/MST1 on Ser-209, upon oxidative stress, inhibits binding to 14-3-3 proteins and nuclear export. PPIA/CYPA promotes its dephosphorylation on Ser-253. Ubiquitinated by SKP2. Ubiquitinated, leading to proteasomal degradation. Ubiquitinated by STUB1/CHIP; when Ser-253 is phosphorylated. Post-translationally, methylation inhibits PKB/AKT1-mediated phosphorylation at Ser-253, promoting nuclear retention and increasing the transcriptional activity and cell death. Methylation increased by oxidative stress. In terms of processing, acetylation at Lys-259 and Lys-271 are necessary for autophagic cell death induction. Deacetylated by SIRT2 in response to oxidative stress or serum deprivation, thereby negatively regulating FOXO1-mediated autophagic cell death. Once in the nucleus, acetylated by CREBBP/EP300. Acetylation diminishes the interaction with target DNA and attenuates the transcriptional activity. It increases the phosphorylation at Ser-253, and is required for the transcriptional inhibition by FCOR. Deacetylation by SIRT1 results in reactivation of the transcriptional activity. Acetylation of FOXO1 diminishes its binding to PPARG in adipocytes. Deacetylated by SIRT2; deacetylation of FOXO1 directly increases its repressive binding to PPARG and inhibits adipocyte differentiation. Oxidative stress by hydrogen peroxide treatment appears to promote deacetylation and uncoupling of insulin-induced phosphorylation. By contrast, resveratrol acts independently of acetylation. Acetylated at Lys-420, promoting its localization to the nucleus and transcription factor activity. Deacetylation at Lys-420 by SIRT6, promotes its translocation into the cytoplasm, preventing its transcription factor activity. Deacetylation and subsequent inhibition by SIRT6 has different effects depending on cell types: it inhibits gluconeogenesis in hepatocytes, promotes glucose sensing in pancreatic beta-cells and regulates lipid catabolism in brown adipocytes. Expressed in liver, white and brown adipose tissues (at protein level).

The protein localises to the cytoplasm. It localises to the nucleus. In terms of biological role, transcription factor that is the main target of insulin signaling and regulates metabolic homeostasis in response to oxidative stress. Binds to the insulin response element (IRE) with consensus sequence 5'-TT[G/A]TTTTG-3' and the related Daf-16 family binding element (DBE) with consensus sequence 5'-TT[G/A]TTTAC-3'. Activity suppressed by insulin. Main regulator of redox balance and osteoblast numbers and controls bone mass. Orchestrates the endocrine function of the skeleton in regulating glucose metabolism. Also acts as a key regulator of chondrogenic commitment of skeletal progenitor cells in response to lipid availability: when lipids levels are low, translocates to the nucleus and promotes expression of SOX9, which induces chondrogenic commitment and suppresses fatty acid oxidation. Acts synergistically with ATF4 to suppress osteocalcin/BGLAP activity, increasing glucose levels and triggering glucose intolerance and insulin insensitivity. Also suppresses the transcriptional activity of RUNX2, an upstream activator of osteocalcin/BGLAP. Acts as an inhibitor of glucose sensing in pancreatic beta cells by acting as a transcription repressor and suppressing expression of PDX1. In hepatocytes, promotes gluconeogenesis by acting together with PPARGC1A and CEBPA to activate the expression of genes such as IGFBP1, G6PC1 and PCK1. Also promotes gluconeogenesis by directly promoting expression of PPARGC1A and G6PC1. Important regulator of cell death acting downstream of CDK1, PKB/AKT1 and STK4/MST1. Promotes neural cell death. Mediates insulin action on adipose tissue. Regulates the expression of adipogenic genes such as PPARG during preadipocyte differentiation and, adipocyte size and adipose tissue-specific gene expression in response to excessive calorie intake. Regulates the transcriptional activity of GADD45A and repair of nitric oxide-damaged DNA in beta-cells. Required for the autophagic cell death induction in response to starvation or oxidative stress in a transcription-independent manner. Mediates the function of MLIP in cardiomyocytes hypertrophy and cardiac remodeling. Positive regulator of apoptosis in cardiac smooth muscle cells as a result of its transcriptional activation of pro-apoptotic genes. Regulates endothelial cell (EC) viability and apoptosis in a PPIA/CYPA-dependent manner via transcription of CCL2 and BCL2L11 which are involved in EC chemotaxis and apoptosis. This Mus musculus (Mouse) protein is Forkhead box protein O1 (Foxo1).